A 453-amino-acid polypeptide reads, in one-letter code: D-aminoacyl-tRNA deacylase (453 aa).

Residues 428 to 453 (VRADVALHERPRERVRRPSDDEGKGN) form a disordered region.

It belongs to the DtdA deacylase family. Monomer. Requires Zn(2+) as cofactor.

It catalyses the reaction a D-aminoacyl-tRNA + H2O = a tRNA + a D-alpha-amino acid + H(+). The catalysed reaction is glycyl-tRNA(Ala) + H2O = tRNA(Ala) + glycine + H(+). In terms of biological role, D-aminoacyl-tRNA deacylase with broad substrate specificity. By recycling D-aminoacyl-tRNA to D-amino acids and free tRNA molecules, this enzyme counteracts the toxicity associated with the formation of D-aminoacyl-tRNA entities in vivo. In Halobacterium salinarum (strain ATCC 29341 / DSM 671 / R1), this protein is D-aminoacyl-tRNA deacylase.